The primary structure comprises 502 residues: ATP synthase subunit alpha (502 aa).

169–176 (GDRQTGKT) serves as a coordination point for ATP.

Belongs to the ATPase alpha/beta chains family. As to quaternary structure, F-type ATPases have 2 components, CF(1) - the catalytic core - and CF(0) - the membrane proton channel. CF(1) has five subunits: alpha(3), beta(3), gamma(1), delta(1), epsilon(1). CF(0) has three main subunits: a(1), b(2) and c(9-12). The alpha and beta chains form an alternating ring which encloses part of the gamma chain. CF(1) is attached to CF(0) by a central stalk formed by the gamma and epsilon chains, while a peripheral stalk is formed by the delta and b chains.

It is found in the cell membrane. It catalyses the reaction ATP + H2O + 4 H(+)(in) = ADP + phosphate + 5 H(+)(out). In terms of biological role, produces ATP from ADP in the presence of a proton gradient across the membrane. The alpha chain is a regulatory subunit. The polypeptide is ATP synthase subunit alpha (Exiguobacterium sp. (strain ATCC BAA-1283 / AT1b)).